Reading from the N-terminus, the 845-residue chain is P protein (845 aa).

The disordered stretch occupies residues 1–57 (MRLENREGRPTSGVLEMELPQASAPSRAGLGSLGLVGLDSSNHRPQQGGSKAGSRGP). Topologically, residues 1 to 183 (MRLENREGRP…HLSKLRCCVQ (183 aa)) are extracellular. Residues 26 to 40 (SRAGLGSLGLVGLDS) are compositionally biased toward low complexity. The helical transmembrane segment at 184-204 (WLKVSGLFVFVVLCSILFSLY) threads the bilayer. The Cytoplasmic portion of the chain corresponds to 205–337 (PDQGKFWQLL…QYLRASIEAQ (133 aa)). Residues 338-358 (VTIAAVILAGVYVLIIFEIVH) traverse the membrane as a helical segment. Residues 359-360 (RT) lie on the Extracellular side of the membrane. A helical membrane pass occupies residues 361-381 (LAAMLGSLAALAALAVIGDRP). The Cytoplasmic portion of the chain corresponds to 382–393 (TLTQVVEWIDFE). Residues 394-414 (TLALLFGMMILVAIFSETGFF) form a helical membrane-spanning segment. Residues 415 to 429 (DYCAVKAYQLSRGRV) are Extracellular-facing. The chain crosses the membrane as a helical span at residues 430–450 (WAMIIMLCLIAAVLSAFLDNV). At 451 to 513 (TTALLFTPVT…ELRKMGLDFA (63 aa)) the chain is on the cytoplasmic side. A helical membrane pass occupies residues 514–534 (GFTAHMFAGICFVLLFSFPLL). Residues 535-629 (RLLYWNRKLY…KKHRISDRTL (95 aa)) lie on the Extracellular side of the membrane. The chain crosses the membrane as a helical span at residues 630–650 (LTKCVTVLGLVIFMFFLNSFV). Pro651 is a topological domain (cytoplasmic). A helical membrane pass occupies residues 652-672 (GVHLDLGWIAILGAIWLLILA). The Extracellular portion of the chain corresponds to 673–687 (DIHDFEIILHRVEWA). A helical membrane pass occupies residues 688-708 (TLLFFAALFILMEALAHLHLI). The Cytoplasmic portion of the chain corresponds to 709-730 (EYVGEQTALLIKMVPEDQRLAA). Residues 731 to 751 (AIIVVVWVSAIASSLIDNIPF) traverse the membrane as a helical segment. The Extracellular portion of the chain corresponds to 752-773 (TATMIPVLLNLSRDPEISLPAP). A helical membrane pass occupies residues 774–794 (PLMYALALGACLGGNGTLIGA). Topologically, residues 795 to 820 (SANVVCAGIAEQHGYGFSFMEFFRLG) are cytoplasmic. The helical transmembrane segment at 821-841 (FPMMVVSCMVGMCYLLVAHVV) threads the bilayer. The Extracellular segment spans residues 842–845 (MGWN).

Belongs to the CitM (TC 2.A.11) transporter family.

It is found in the melanosome membrane. It catalyses the reaction chloride(in) = chloride(out). Contributes to a melanosome-specific anion (chloride) current that modulates melanosomal pH for optimal tyrosinase activity required for melanogenesis and the melanosome maturation. One of the components of the mammalian pigmentary system. May serve as a key control point at which ethnic skin color variation is determined. Major determinant of brown and/or blue eye color. Seems to regulate the post-translational processing of tyrosinase, which catalyzes the limiting reaction in melanin synthesis. The sequence is that of P protein (Oca2) from Sus scrofa (Pig).